Here is a 164-residue protein sequence, read N- to C-terminus: uncharacterized protein (164 aa).

The transit peptide at 1–60 (MERSASVGVNDGRFGGNQFYSPSFSSSSSSSSMRHVNYSCGSCGYELNLSSTNRITSTIG) directs the protein to the chloroplast.

It is found in the plastid. The protein localises to the chloroplast. This is an uncharacterized protein from Arabidopsis thaliana (Mouse-ear cress).